The following is a 228-amino-acid chain: Phosphoribosylformylglycinamidine synthase subunit PurQ (228 aa).

The region spanning 3 to 226 (FAVVVFPGSN…VTYWRDAHVV (224 aa)) is the Glutamine amidotransferase type-1 domain. Catalysis depends on C86, which acts as the Nucleophile. Catalysis depends on residues H195 and E197.

In terms of assembly, part of the FGAM synthase complex composed of 1 PurL, 1 PurQ and 2 PurS subunits.

Its subcellular location is the cytoplasm. The enzyme catalyses N(2)-formyl-N(1)-(5-phospho-beta-D-ribosyl)glycinamide + L-glutamine + ATP + H2O = 2-formamido-N(1)-(5-O-phospho-beta-D-ribosyl)acetamidine + L-glutamate + ADP + phosphate + H(+). The catalysed reaction is L-glutamine + H2O = L-glutamate + NH4(+). Its pathway is purine metabolism; IMP biosynthesis via de novo pathway; 5-amino-1-(5-phospho-D-ribosyl)imidazole from N(2)-formyl-N(1)-(5-phospho-D-ribosyl)glycinamide: step 1/2. Its function is as follows. Part of the phosphoribosylformylglycinamidine synthase complex involved in the purines biosynthetic pathway. Catalyzes the ATP-dependent conversion of formylglycinamide ribonucleotide (FGAR) and glutamine to yield formylglycinamidine ribonucleotide (FGAM) and glutamate. The FGAM synthase complex is composed of three subunits. PurQ produces an ammonia molecule by converting glutamine to glutamate. PurL transfers the ammonia molecule to FGAR to form FGAM in an ATP-dependent manner. PurS interacts with PurQ and PurL and is thought to assist in the transfer of the ammonia molecule from PurQ to PurL. The polypeptide is Phosphoribosylformylglycinamidine synthase subunit PurQ (Anoxybacillus flavithermus (strain DSM 21510 / WK1)).